Here is a 1331-residue protein sequence, read N- to C-terminus: Sodium-dependent transporter bedraggled (1331 aa).

The tract at residues 1–62 (MSSKEQQAAG…QLEHEQFGLS (62 aa)) is disordered. Over residues 16–25 (NSNAYSSLPP) the composition is skewed to polar residues. Gly residues predominate over residues 28 to 43 (TGAGCSGAALGSGTGT). The N-linked (GlcNAc...) asparagine glycan is linked to N168. Disordered regions lie at residues 221-284 (EPRT…TEPV) and 363-473 (QTNA…SASS). Residues 258 to 282 (KTFSCSLRPTSQIASSSGSLETSTE) are compositionally biased toward polar residues. The segment covering 369–383 (SSEEPRPRQYGRRLE) has biased composition (basic and acidic residues). The span at 413 to 436 (LQDTPTHPIMSTCSELSSARSSRM) shows a compositional bias: polar residues. Over residues 437-453 (PSPVSLPSDSSSSGSSS) the composition is skewed to low complexity. Positions 463 to 473 (VQTTTMCSASS) are enriched in polar residues. 3 helical membrane-spanning segments follow: residues 505-525 (LALI…VLTI), 531-551 (FLLQ…WLQM), and 567-587 (ISPI…FLAL). N-linked (GlcNAc...) asparagine glycosylation is found at N627 and N631. Helical transmembrane passes span 667–687 (QLAF…CKGL), 696–716 (IIYT…VYVV), 741–761 (TAAT…VIAI), and 778–798 (AILL…LALC). N857 carries N-linked (GlcNAc...) asparagine glycosylation. Residues 890–910 (WVWAAVAFATFAGFGLAQLCV) traverse the membrane as a helical segment. Residue N921 is glycosylated (N-linked (GlcNAc...) asparagine). 4 helical membrane-spanning segments follow: residues 926 to 946 (VLLS…EMGI), 956 to 976 (LGGS…VFLI), 998 to 1018 (AFLA…LSVV), and 1044 to 1064 (MGSL…IIQI). 3 disordered regions span residues 1086-1136 (PEEG…SYTT), 1169-1238 (SLDA…ASTL), and 1256-1275 (VRHR…TLPR). Composition is skewed to polar residues over residues 1097-1115 (ARQT…TTEG) and 1186-1196 (ILTNPAGSSFN). The span at 1197–1209 (ADPSPASSSSPES) shows a compositional bias: low complexity.

This sequence belongs to the sodium:neurotransmitter symporter (SNF) (TC 2.A.22) family.

Its subcellular location is the membrane. Functionally, putative sodium-dependent transporter which is required for viability, early imaginal disk development and adult motor coordination. Also has a role in the fate commitment of the R3/R4 photoreceptor cells. May function in ommatidial polarity by regulating the activity of the core polarity genes, acting upstream of (or in parallel to) Vang, dsh, pk, stan, and dgo, but downstream or independently of fz. This chain is Sodium-dependent transporter bedraggled, found in Drosophila melanogaster (Fruit fly).